We begin with the raw amino-acid sequence, 137 residues long: MANAASGMAVHDDCKLKFMELKAKRTFRTIVYKIEDKQVIVEKLGEPEQSYDDFAASLPADDCRYCIYDFDFVTAENCQKSKIFFIAWSPDTAKVRDKMIYASSKDRFKRELDGIQVELQATDPTEMGLDVFKSRTN.

Residues 5 to 137 (ASGMAVHDDC…GLDVFKSRTN (133 aa)) enclose the ADF-H domain. Ser-6 carries the post-translational modification Phosphoserine.

The protein belongs to the actin-binding proteins ADF family. Interacts with AIP1-1.

The protein localises to the cytoplasm. The protein resides in the cytoskeleton. In terms of biological role, actin-depolymerizing protein. Severs actin filaments (F-actin) and binds to actin monomers. Required for normal cell growth, plant development, cell organ expansion and flowering. Essential for root-knot nematode infection. The polypeptide is Actin-depolymerizing factor 2 (ADF2) (Arabidopsis thaliana (Mouse-ear cress)).